The following is a 668-amino-acid chain: DNA ligase (668 aa).

NAD(+) is bound by residues 34–38 (DTEYD), 83–84 (SL), and E114. Residue K116 is the N6-AMP-lysine intermediate of the active site. Residues R137, E171, K286, and K310 each contribute to the NAD(+) site. The Zn(2+) site is built by C404, C407, C422, and C427. A BRCT domain is found at 588 to 668 (NSDSIIANKS…FFDLLKSEKG (81 aa)).

It belongs to the NAD-dependent DNA ligase family. LigA subfamily. The cofactor is Mg(2+). Requires Mn(2+) as cofactor.

It carries out the reaction NAD(+) + (deoxyribonucleotide)n-3'-hydroxyl + 5'-phospho-(deoxyribonucleotide)m = (deoxyribonucleotide)n+m + AMP + beta-nicotinamide D-nucleotide.. Functionally, DNA ligase that catalyzes the formation of phosphodiester linkages between 5'-phosphoryl and 3'-hydroxyl groups in double-stranded DNA using NAD as a coenzyme and as the energy source for the reaction. It is essential for DNA replication and repair of damaged DNA. The sequence is that of DNA ligase from Mycoplasma mycoides subsp. mycoides SC (strain CCUG 32753 / NCTC 10114 / PG1).